The sequence spans 248 residues: Glucosamine-6-phosphate isomerase (248 aa).

Catalysis depends on Asp-68, which acts as the Proton acceptor; for enolization step. Glu-137 (for ring-opening step) is an active-site residue. His-139 (proton acceptor; for ring-opening step) is an active-site residue. Catalysis depends on Glu-144, which acts as the For ring-opening step.

This sequence belongs to the glucosamine/galactosamine-6-phosphate isomerase family. As to quaternary structure, monomer.

It catalyses the reaction alpha-D-glucosamine 6-phosphate + H2O = beta-D-fructose 6-phosphate + NH4(+). This chain is Glucosamine-6-phosphate isomerase (NAG1), found in Candida albicans (strain SC5314 / ATCC MYA-2876) (Yeast).